A 722-amino-acid chain; its full sequence is Formin-like protein 16 (722 aa).

Disordered stretches follow at residues 1–56, 564–606, 635–672, and 690–722; these read MSPV…PMFD, ATED…PSRP, VGSP…HLSH, and PLLV…LRYQ. A compositionally biased stretch (pro residues) spans 22–55; the sequence is PLPPPPPPPMRRSAPSPPPMSGRVPPPPPPPPMF. The FH2 domain occupies 182–571; that stretch reads FRCPVTKRSS…KAATEDVFGG (390 aa). Composition is skewed to pro residues over residues 593–605, 638–658, and 709–722; these read IRPP…PPSR, PSPP…PPPM, and APPP…LRYQ.

The protein belongs to the formin-like family. Class-II subfamily.

The polypeptide is Formin-like protein 16 (FH16) (Arabidopsis thaliana (Mouse-ear cress)).